The sequence spans 663 residues: Probable receptor-like protein kinase At1g49730 (663 aa).

The first 25 residues, 1 to 25, serve as a signal peptide directing secretion; the sequence is MVVNSQAFLLALIALLATQLPSLMA. At 26–254 the chain is on the extracellular side; the sequence is ADCPLDFSGS…TNPYHLTMVP (229 aa). Residues N36, N46, N70, N101, and N171 are each glycosylated (N-linked (GlcNAc...) asparagine). A disordered region spans residues 213–243; the sequence is SFSPVASPEPSPSTVGGISPSNSDSQMTTSR. A compositionally biased stretch (polar residues) spans 224 to 243; that stretch reads PSTVGGISPSNSDSQMTTSR. A helical transmembrane segment spans residues 255–275; it reads TIGIVVTAVALTMLVVLVILI. At 276-663 the chain is on the cytoplasmic side; it reads RRKNRELDES…PHSPINGFSF (388 aa). Residues 327 to 609 form the Protein kinase domain; that stretch reads NDFNTVIGQG…ESCDPVHSAF (283 aa). ATP is bound by residues 333-341 and K355; that span reads IGQGGFGTV. The active-site Proton acceptor is the D451. A disordered region spans residues 631–663; it reads RGDSRIFGPSSSTTSRSHYSRSLPHSPINGFSF. Residues 640–652 are compositionally biased toward low complexity; that stretch reads SSSTTSRSHYSRS.

Belongs to the protein kinase superfamily. Ser/Thr protein kinase family.

The protein localises to the cell membrane. It carries out the reaction L-seryl-[protein] + ATP = O-phospho-L-seryl-[protein] + ADP + H(+). It catalyses the reaction L-threonyl-[protein] + ATP = O-phospho-L-threonyl-[protein] + ADP + H(+). The chain is Probable receptor-like protein kinase At1g49730 from Arabidopsis thaliana (Mouse-ear cress).